A 315-amino-acid polypeptide reads, in one-letter code: 4-diphosphocytidyl-2-C-methyl-D-erythritol kinase (315 aa).

Lys-10 is a catalytic residue. 107 to 117 contributes to the ATP binding site; that stretch reads PVAGGMAGGSA. Residue Asp-148 is part of the active site. Positions 292–315 are disordered; that stretch reads HPATSPVPGPAKNRGAHIVSIESE.

The protein belongs to the GHMP kinase family. IspE subfamily.

It carries out the reaction 4-CDP-2-C-methyl-D-erythritol + ATP = 4-CDP-2-C-methyl-D-erythritol 2-phosphate + ADP + H(+). Its pathway is isoprenoid biosynthesis; isopentenyl diphosphate biosynthesis via DXP pathway; isopentenyl diphosphate from 1-deoxy-D-xylulose 5-phosphate: step 3/6. Its function is as follows. Catalyzes the phosphorylation of the position 2 hydroxy group of 4-diphosphocytidyl-2C-methyl-D-erythritol. This Corynebacterium efficiens (strain DSM 44549 / YS-314 / AJ 12310 / JCM 11189 / NBRC 100395) protein is 4-diphosphocytidyl-2-C-methyl-D-erythritol kinase.